A 740-amino-acid polypeptide reads, in one-letter code: 1,4-alpha-glucan branching enzyme GlgB (740 aa).

Residue Asp409 is the Nucleophile of the active site. The active-site Proton donor is Glu462.

This sequence belongs to the glycosyl hydrolase 13 family. GlgB subfamily. In terms of assembly, monomer.

It catalyses the reaction Transfers a segment of a (1-&gt;4)-alpha-D-glucan chain to a primary hydroxy group in a similar glucan chain.. The protein operates within glycan biosynthesis; glycogen biosynthesis. Its function is as follows. Catalyzes the formation of the alpha-1,6-glucosidic linkages in glycogen by scission of a 1,4-alpha-linked oligosaccharide from growing alpha-1,4-glucan chains and the subsequent attachment of the oligosaccharide to the alpha-1,6 position. This chain is 1,4-alpha-glucan branching enzyme GlgB, found in Methylococcus capsulatus (strain ATCC 33009 / NCIMB 11132 / Bath).